Here is a 319-residue protein sequence, read N- to C-terminus: DNA-directed RNA polymerase subunit alpha (319 aa).

Residues 1–227 (MKEFIFPMKI…KHMNMLTNIS (227 aa)) are alpha N-terminal domain (alpha-NTD). The alpha C-terminal domain (alpha-CTD) stretch occupies residues 242-319 (LMEKLTFSIE…NIGEQRSSEV (78 aa)).

Belongs to the RNA polymerase alpha chain family. As to quaternary structure, homodimer. The RNAP catalytic core consists of 2 alpha, 1 beta, 1 beta' and 1 omega subunit. When a sigma factor is associated with the core the holoenzyme is formed, which can initiate transcription.

It carries out the reaction RNA(n) + a ribonucleoside 5'-triphosphate = RNA(n+1) + diphosphate. In terms of biological role, DNA-dependent RNA polymerase catalyzes the transcription of DNA into RNA using the four ribonucleoside triphosphates as substrates. This chain is DNA-directed RNA polymerase subunit alpha, found in Hydrogenobaculum sp. (strain Y04AAS1).